Reading from the N-terminus, the 210-residue chain is Probable septum site-determining protein MinC (210 aa).

It belongs to the MinC family. Interacts with MinD and FtsZ.

In terms of biological role, cell division inhibitor that blocks the formation of polar Z ring septums. Rapidly oscillates between the poles of the cell to destabilize FtsZ filaments that have formed before they mature into polar Z rings. Prevents FtsZ polymerization. This is Probable septum site-determining protein MinC from Clostridium novyi (strain NT).